The primary structure comprises 255 residues: Octanoyltransferase (255 aa).

Residues 54-238 enclose the BPL/LPL catalytic domain; sequence GDAAELVWLL…AFTEIFGATV (185 aa). Substrate is bound by residues 92–99, 167–169, and 180–182; these read RGGQLTYH, AIG, and GIA. Cysteine 198 acts as the Acyl-thioester intermediate in catalysis.

This sequence belongs to the LipB family.

It localises to the cytoplasm. The enzyme catalyses octanoyl-[ACP] + L-lysyl-[protein] = N(6)-octanoyl-L-lysyl-[protein] + holo-[ACP] + H(+). It functions in the pathway protein modification; protein lipoylation via endogenous pathway; protein N(6)-(lipoyl)lysine from octanoyl-[acyl-carrier-protein]: step 1/2. Functionally, catalyzes the transfer of endogenously produced octanoic acid from octanoyl-acyl-carrier-protein onto the lipoyl domains of lipoate-dependent enzymes. Lipoyl-ACP can also act as a substrate although octanoyl-ACP is likely to be the physiological substrate. This chain is Octanoyltransferase, found in Rhodopseudomonas palustris (strain HaA2).